A 79-amino-acid polypeptide reads, in one-letter code: uncharacterized protein (79 aa).

Residues 1–19 (MKYVALAFVLSLVILQISA) form the signal peptide. Positions 52–71 (RGRKSRTQSGRNQGKSTSDS) are disordered. A compositionally biased stretch (polar residues) spans 58–71 (TQSGRNQGKSTSDS).

As to expression, nacreous layer of shell (at protein level). Expressed primarily in the mantle with highest level in the mantle pallium and lower level in the mantle edge.

It localises to the secreted. This is an uncharacterized protein from Margaritifera margaritifera (Freshwater pearl mussel).